The sequence spans 643 residues: Protein THEMIS2 (643 aa).

CABIT stretches follow at residues 1–238 (MEPV…TASS) and 239–514 (RHVH…KAKG). The segment at 546–631 (EIQAPPPRPP…RQDLDDDEHD (86 aa)) is disordered. Threonine 593 carries the phosphothreonine modification. The span at 609 to 619 (PAHRKGHRPAK) shows a compositional bias: basic residues. Residue tyrosine 632 is modified to Phosphotyrosine.

It belongs to the themis family. Interacts with VAV1. Interacts with LAT. Interacts constitutively with GRB2, LYN and PLCG2; these interactions increase the activation of PLCG2 and its downstream pathways following B cell receptor stimulation. Post-translationally, phosphorylation at Tyr-632 is induced by LPS. Phosphorylated by Src kinases (Lck or Fyn) following BCR engagement. Expressed in different endometrial adenocarcinoma cell lines and various other cell lines apart from the prostate cell line LNCaP and the ovarian cancer cell line BG1.

The protein localises to the nucleus. The protein resides in the cytoplasm. May constitute a control point in macrophage inflammatory response, promoting LPS-induced TLR4-mediated TNF production. Determines the threshold for activation of B cells by low-affinity and low-avidity ligands via PLCG2 activation and its downstream pathways. This chain is Protein THEMIS2, found in Homo sapiens (Human).